Here is a 237-residue protein sequence, read N- to C-terminus: Uracil-DNA glycosylase (237 aa).

D77 acts as the Proton acceptor in catalysis.

This sequence belongs to the uracil-DNA glycosylase (UDG) superfamily. UNG family.

The protein localises to the cytoplasm. It carries out the reaction Hydrolyzes single-stranded DNA or mismatched double-stranded DNA and polynucleotides, releasing free uracil.. Excises uracil residues from the DNA which can arise as a result of misincorporation of dUMP residues by DNA polymerase or due to deamination of cytosine. The protein is Uracil-DNA glycosylase of Acinetobacter baumannii (strain SDF).